Here is a 426-residue protein sequence, read N- to C-terminus: Glutamate-1-semialdehyde 2,1-aminomutase (426 aa).

Lys-265 is modified (N6-(pyridoxal phosphate)lysine).

The protein belongs to the class-III pyridoxal-phosphate-dependent aminotransferase family. HemL subfamily. As to quaternary structure, homodimer. The cofactor is pyridoxal 5'-phosphate.

The protein resides in the cytoplasm. It catalyses the reaction (S)-4-amino-5-oxopentanoate = 5-aminolevulinate. It participates in porphyrin-containing compound metabolism; protoporphyrin-IX biosynthesis; 5-aminolevulinate from L-glutamyl-tRNA(Glu): step 2/2. The chain is Glutamate-1-semialdehyde 2,1-aminomutase from Salmonella typhi.